The following is a 163-amino-acid chain: Cytochrome c-type biogenesis protein CcmE (163 aa).

The Cytoplasmic segment spans residues 1 to 7 (MTRKQRR). A helical; Signal-anchor for type II membrane protein membrane pass occupies residues 8–28 (LVFIGTCGAVLAVALGLVLWA). At 29-163 (MSGTIVFFRS…RTASGEARAP (135 aa)) the chain is on the periplasmic side. H122 and Y126 together coordinate heme. The segment at 134 to 163 (ALKKSGRWQEGAGHPAPAPPRTASGEARAP) is disordered.

This sequence belongs to the CcmE/CycJ family.

It localises to the cell inner membrane. In terms of biological role, heme chaperone required for the biogenesis of c-type cytochromes. Transiently binds heme delivered by CcmC and transfers the heme to apo-cytochromes in a process facilitated by CcmF and CcmH. This Methylobacterium sp. (strain 4-46) protein is Cytochrome c-type biogenesis protein CcmE.